A 186-amino-acid chain; its full sequence is tRNA (cytidine(56)-2'-O)-methyltransferase (186 aa).

S-adenosyl-L-methionine is bound by residues Leu-84 and 110–114; that span reads GAEKV.

The protein belongs to the aTrm56 family. Homodimer.

Its subcellular location is the cytoplasm. The catalysed reaction is cytidine(56) in tRNA + S-adenosyl-L-methionine = 2'-O-methylcytidine(56) in tRNA + S-adenosyl-L-homocysteine + H(+). Its function is as follows. Specifically catalyzes the AdoMet-dependent 2'-O-ribose methylation of cytidine at position 56 in tRNAs. The polypeptide is tRNA (cytidine(56)-2'-O)-methyltransferase (Staphylothermus marinus (strain ATCC 43588 / DSM 3639 / JCM 9404 / F1)).